Consider the following 86-residue polypeptide: uncharacterized protein (86 aa).

It to M.jannaschii MJ1173.

This is an uncharacterized protein from Methanosarcina mazei (strain ATCC BAA-159 / DSM 3647 / Goe1 / Go1 / JCM 11833 / OCM 88) (Methanosarcina frisia).